Here is a 517-residue protein sequence, read N- to C-terminus: 2,3-bisphosphoglycerate-independent phosphoglycerate mutase (517 aa).

2 residues coordinate Mn(2+): Asp-12 and Ser-62. Catalysis depends on Ser-62, which acts as the Phosphoserine intermediate. Substrate is bound by residues His-123, 153–154 (RD), Arg-185, Arg-191, 261–264 (RSDR), and Lys-336. Mn(2+) is bound by residues Asp-403, His-407, Asp-444, His-445, and His-463.

It belongs to the BPG-independent phosphoglycerate mutase family. Monomer. It depends on Mn(2+) as a cofactor.

It catalyses the reaction (2R)-2-phosphoglycerate = (2R)-3-phosphoglycerate. It functions in the pathway carbohydrate degradation; glycolysis; pyruvate from D-glyceraldehyde 3-phosphate: step 3/5. Functionally, catalyzes the interconversion of 2-phosphoglycerate and 3-phosphoglycerate. The polypeptide is 2,3-bisphosphoglycerate-independent phosphoglycerate mutase (Methylobacillus flagellatus (strain ATCC 51484 / DSM 6875 / VKM B-1610 / KT)).